Consider the following 116-residue polypeptide: U16-barytoxin-Tl1d (116 aa).

Residues 1 to 20 (MKTIIVFLSLLVLATKFGDA) form the signal peptide. The propeptide occupies 21–74 (NEGVNQEQMKEVIQNEFREDFLNEMAAMSLLQQLEAIESTLLEKEADRNSRQKR). Intrachain disulfides connect Cys-75–Cys-90, Cys-82–Cys-95, and Cys-89–Cys-110.

This sequence belongs to the neurotoxin 14 (magi-1) family. 06 (ICK-Trit) subfamily. In terms of tissue distribution, expressed by the venom gland.

The protein resides in the secreted. Functionally, ion channel inhibitor. The sequence is that of U16-barytoxin-Tl1d from Trittame loki (Brush-footed trapdoor spider).